The following is a 460-amino-acid chain: Inactive ubiquitin carboxyl-terminal hydrolase MINDY-4B (460 aa).

Residues 41 to 76 are disordered; sequence TNNSTPQNHEGNHTSADENEDGTGLSQPKGQGHLPS.

The protein belongs to the MINDY deubiquitinase family. FAM188 subfamily.

This Homo sapiens (Human) protein is Inactive ubiquitin carboxyl-terminal hydrolase MINDY-4B.